Consider the following 222-residue polypeptide: MKGLLHFLLAKIILLALASSFVYCYEPSPLQDYCVATNETNGVYVNGKFCKDPKCVTANDFYTSGLNVPGNTSTGPGVKITVVDVKRMPGLNTLGVDIARIDFAPGGLYPPHTHPRGSEIFLVMKGKLFVGFVSSNEYNYTLFTKVLYPGDVFVFPKGLIQFHANIGKTNAVVIAATGSQNPGRIIIGNAVFGSKPLIDPKVLAKAFALDFNKVKYFQAVFS.

Residues 1-24 (MKGLLHFLLAKIILLALASSFVYC) form the signal peptide. A disulfide bond links cysteine 34 and cysteine 50. N-linked (GlcNAc...) asparagine glycans are attached at residues asparagine 38 and asparagine 71. Residues 64–215 (SGLNVPGNTS…AFALDFNKVK (152 aa)) form the Cupin type-1 domain. Residues histidine 112, histidine 114, and glutamate 119 each contribute to the Mn(2+) site. N-linked (GlcNAc...) asparagine glycosylation is present at asparagine 139. Histidine 163 lines the Mn(2+) pocket.

It belongs to the germin family. In terms of assembly, oligomer (believed to be a pentamer but probably hexamer).

It is found in the secreted. The protein resides in the extracellular space. The protein localises to the apoplast. Functionally, may play a role in plant defense. Probably has no oxalate oxidase activity even if the active site is conserved. In Arabidopsis thaliana (Mouse-ear cress), this protein is Germin-like protein subfamily 1 member 5.